The primary structure comprises 443 residues: UDP-N-acetylmuramate--L-alanine ligase (443 aa).

110 to 116 (GAHGKTS) lines the ATP pocket.

Belongs to the MurCDEF family.

It is found in the cytoplasm. The catalysed reaction is UDP-N-acetyl-alpha-D-muramate + L-alanine + ATP = UDP-N-acetyl-alpha-D-muramoyl-L-alanine + ADP + phosphate + H(+). Its pathway is cell wall biogenesis; peptidoglycan biosynthesis. Cell wall formation. This is UDP-N-acetylmuramate--L-alanine ligase from Streptococcus gordonii (strain Challis / ATCC 35105 / BCRC 15272 / CH1 / DL1 / V288).